Reading from the N-terminus, the 149-residue chain is Transcriptional repressor NrdR (149 aa).

The segment at 3–34 (CPFCSAVDTKVIDSRLVGEGSQVRRRRQCLVC) is a zinc-finger region. The region spanning 49–139 (PRVIKSNEVR…VYRSFEDIRE (91 aa)) is the ATP-cone domain.

Belongs to the NrdR family. It depends on Zn(2+) as a cofactor.

Its function is as follows. Negatively regulates transcription of bacterial ribonucleotide reductase nrd genes and operons by binding to NrdR-boxes. The chain is Transcriptional repressor NrdR from Pectobacterium carotovorum subsp. carotovorum (strain PC1).